We begin with the raw amino-acid sequence, 287 residues long: Shikimate dehydrogenase (NADP(+)) (287 aa).

Residues 20-22 (SRS) and Thr67 contribute to the shikimate site. Residue Lys71 is the Proton acceptor of the active site. Glu84 contacts NADP(+). Asn93 and Asp108 together coordinate shikimate. Residues 132–136 (GAGGA), 156–161 (NRTAAR), and Met226 contribute to the NADP(+) site. Tyr228 provides a ligand contact to shikimate. An NADP(+)-binding site is contributed by Gly250.

It belongs to the shikimate dehydrogenase family. In terms of assembly, homodimer.

It carries out the reaction shikimate + NADP(+) = 3-dehydroshikimate + NADPH + H(+). The protein operates within metabolic intermediate biosynthesis; chorismate biosynthesis; chorismate from D-erythrose 4-phosphate and phosphoenolpyruvate: step 4/7. In terms of biological role, involved in the biosynthesis of the chorismate, which leads to the biosynthesis of aromatic amino acids. Catalyzes the reversible NADPH linked reduction of 3-dehydroshikimate (DHSA) to yield shikimate (SA). The protein is Shikimate dehydrogenase (NADP(+)) of Bordetella bronchiseptica (strain ATCC BAA-588 / NCTC 13252 / RB50) (Alcaligenes bronchisepticus).